A 61-amino-acid polypeptide reads, in one-letter code: MATVAKINQANRKAKYPTRQYNRCKVCGRPRGYLRKFKMCRVCFRKLASEGQIPGVTKSSW.

Residues Cys-24, Cys-27, Cys-40, and Cys-43 each coordinate Zn(2+).

The protein belongs to the universal ribosomal protein uS14 family. Zinc-binding uS14 subfamily. In terms of assembly, part of the 30S ribosomal subunit. Contacts proteins S3 and S10. Zn(2+) is required as a cofactor.

Its function is as follows. Binds 16S rRNA, required for the assembly of 30S particles and may also be responsible for determining the conformation of the 16S rRNA at the A site. In Treponema denticola (strain ATCC 35405 / DSM 14222 / CIP 103919 / JCM 8153 / KCTC 15104), this protein is Small ribosomal subunit protein uS14.